The sequence spans 304 residues: Putative S-adenosyl-L-methionine-dependent methyltransferase Mmcs_1043 (304 aa).

Residues Asp-130 and 159 to 160 (DL) contribute to the S-adenosyl-L-methionine site.

It belongs to the UPF0677 family.

Exhibits S-adenosyl-L-methionine-dependent methyltransferase activity. The sequence is that of Putative S-adenosyl-L-methionine-dependent methyltransferase Mmcs_1043 from Mycobacterium sp. (strain MCS).